A 119-amino-acid polypeptide reads, in one-letter code: Holo-[acyl-carrier-protein] synthase (119 aa).

Mg(2+) is bound by residues aspartate 8 and glutamate 53.

This sequence belongs to the P-Pant transferase superfamily. AcpS family. It depends on Mg(2+) as a cofactor.

The protein localises to the cytoplasm. The catalysed reaction is apo-[ACP] + CoA = holo-[ACP] + adenosine 3',5'-bisphosphate + H(+). In terms of biological role, transfers the 4'-phosphopantetheine moiety from coenzyme A to a Ser of acyl-carrier-protein. This is Holo-[acyl-carrier-protein] synthase from Petrotoga mobilis (strain DSM 10674 / SJ95).